A 471-amino-acid chain; its full sequence is Arginine biosynthesis bifunctional protein ArgJ, mitochondrial (471 aa).

A mitochondrion-targeting transit peptide spans 1-33; it reads MAMAGCNGFFLHQLRQPRLQLARQLGRTPSRAY. Substrate is bound by residues threonine 201, lysine 230, threonine 241, glutamate 327, asparagine 466, and threonine 471. Catalysis depends on threonine 241, which acts as the Nucleophile.

The protein belongs to the ArgJ family. Heterodimer of an alpha and a beta chain. Post-translationally, the alpha and beta chains are autoproteolytically processed from a single precursor protein within the mitochondrion.

It localises to the mitochondrion matrix. The catalysed reaction is N(2)-acetyl-L-ornithine + L-glutamate = N-acetyl-L-glutamate + L-ornithine. It carries out the reaction L-glutamate + acetyl-CoA = N-acetyl-L-glutamate + CoA + H(+). It participates in amino-acid biosynthesis; L-arginine biosynthesis; L-ornithine and N-acetyl-L-glutamate from L-glutamate and N(2)-acetyl-L-ornithine (cyclic): step 1/1. Its pathway is amino-acid biosynthesis; L-arginine biosynthesis; N(2)-acetyl-L-ornithine from L-glutamate: step 1/4. Catalyzes two activities which are involved in the cyclic version of arginine biosynthesis: the synthesis of acetylglutamate from glutamate and acetyl-CoA, and of ornithine by transacetylation between acetylornithine and glutamate. The chain is Arginine biosynthesis bifunctional protein ArgJ, mitochondrial from Chaetomium globosum (strain ATCC 6205 / CBS 148.51 / DSM 1962 / NBRC 6347 / NRRL 1970) (Soil fungus).